A 271-amino-acid polypeptide reads, in one-letter code: Putative hydro-lyase blr2921 (271 aa).

The protein belongs to the D-glutamate cyclase family.

This is Putative hydro-lyase blr2921 from Bradyrhizobium diazoefficiens (strain JCM 10833 / BCRC 13528 / IAM 13628 / NBRC 14792 / USDA 110).